The sequence spans 347 residues: Ileal sodium/bile acid cotransporter (347 aa).

The Extracellular portion of the chain corresponds to 1-29; the sequence is MSNLTVGCLANATVCEGASCVAPESNFNA. Residues Asn3 and Asn11 are each glycosylated (N-linked (GlcNAc...) asparagine). A helical membrane pass occupies residues 30–50; the sequence is ILSVVLSTVLTILLALVMFSM. The Cytoplasmic segment spans residues 51–83; that stretch reads GCNVEIKKFLGHIRRPWGIFIGFLCQFGIMPLT. Residues 84–104 form a helical membrane-spanning segment; the sequence is GFVLAVAFGIMPIQAVVVLIM. The Extracellular segment spans residues 105-127; it reads GCCPGGTASNILAYWVDGDMDLS. The helical transmembrane segment at 128 to 148 threads the bilayer; that stretch reads VSMTTCSTLLALGMMPLCLYV. The Cytoplasmic portion of the chain corresponds to 149 to 158; sequence YTKMWVDSGT. Residues 159–179 form a helical membrane-spanning segment; sequence IVIPYDNIGTSLVALVVPVSI. At 180-196 the chain is on the extracellular side; it reads GMFVNHKWPQKAKIILK. Residues 197-217 form a helical membrane-spanning segment; that stretch reads VGSIAGAVLIVLIAVVGGILY. The Cytoplasmic portion of the chain corresponds to 218-225; it reads QSAWIIEP. The chain crosses the membrane as a helical span at residues 226–246; it reads KLWIIGTIFPMAGYSLGFFLA. Residues 247 to 289 lie on the Extracellular side of the membrane; it reads RIAGQPWYRCRTVALETGMQNTQLCSTIVQLSFSPEDLTYVFT. A helical membrane pass occupies residues 290-310; sequence FPLIYSIFQIAFAAIFLGIYV. Topologically, residues 311–347 are cytoplasmic; sequence AYRKCHGKNDAEFPDIKDTKTEPESSFHQMNGGFQPE. Basic and acidic residues predominate over residues 323–335; that stretch reads FPDIKDTKTEPES. The disordered stretch occupies residues 323-347; the sequence is FPDIKDTKTEPESSFHQMNGGFQPE. Ser336 is subject to Phosphoserine.

It belongs to the bile acid:sodium symporter (BASS) (TC 2.A.28) family. Monomer and homodimer.

Its subcellular location is the membrane. It catalyses the reaction taurocholate(out) + 2 Na(+)(out) = taurocholate(in) + 2 Na(+)(in). The catalysed reaction is cholate(out) + 2 Na(+)(out) = cholate(in) + 2 Na(+)(in). The enzyme catalyses taurochenodeoxycholate(out) + 2 Na(+)(out) = taurochenodeoxycholate(in) + 2 Na(+)(in). It carries out the reaction tauroursodeoxycholate(out) + 2 Na(+)(out) = tauroursodeoxycholate(in) + 2 Na(+)(in). It catalyses the reaction glycocholate(out) + 2 Na(+)(out) = glycocholate(in) + 2 Na(+)(in). The catalysed reaction is tauronorcholate(out) + 2 Na(+)(out) = tauronorcholate(in) + 2 Na(+)(in). The enzyme catalyses tauroallocholate(out) + 2 Na(+)(out) = tauroallocholate(in) + 2 Na(+)(in). It carries out the reaction taurodeoxycholate(out) + 2 Na(+)(out) = taurodeoxycholate(in) + 2 Na(+)(in). It catalyses the reaction tauro-beta-muricholate(out) + 2 Na(+)(out) = tauro-beta-muricholate(in) + 2 Na(+)(in). Its function is as follows. Plays a critical role in the sodium-dependent reabsorption of bile acids from the lumen of the small intestine. Transports various bile acids, unconjugated or conjugated, such as cholate and taurocholate. Also responsible for bile acid transport in the renal proximal tubules, a salvage mechanism that helps conserve bile acids. Works collaboratively with the Na(+)-taurocholate cotransporting polypeptide (NTCP), the organic solute transporter (OST), and the bile salt export pump (BSEP), to ensure efficacious biological recycling of bile acids during enterohepatic circulation. The polypeptide is Ileal sodium/bile acid cotransporter (SLC10A2) (Oryctolagus cuniculus (Rabbit)).